The sequence spans 375 residues: tRNA-specific 2-thiouridylase MnmA (375 aa).

ATP contacts are provided by residues 8–15 (GLSGGVDS) and Met34. Residues 104–106 (NPD) form an interaction with target base in tRNA region. Residue Cys109 is the Nucleophile of the active site. Cys109 and Cys208 are oxidised to a cystine. Gly134 lines the ATP pocket. An interaction with tRNA region spans residues 158-160 (KDQ). The active-site Cysteine persulfide intermediate is the Cys208. The interaction with tRNA stretch occupies residues 321–322 (RY).

The protein belongs to the MnmA/TRMU family.

It localises to the cytoplasm. It catalyses the reaction S-sulfanyl-L-cysteinyl-[protein] + uridine(34) in tRNA + AH2 + ATP = 2-thiouridine(34) in tRNA + L-cysteinyl-[protein] + A + AMP + diphosphate + H(+). Functionally, catalyzes the 2-thiolation of uridine at the wobble position (U34) of tRNA, leading to the formation of s(2)U34. In Mycoplasma capricolum subsp. capricolum (strain California kid / ATCC 27343 / NCTC 10154), this protein is tRNA-specific 2-thiouridylase MnmA.